Here is a 641-residue protein sequence, read N- to C-terminus: Chaperone protein DnaK (641 aa).

Thr199 carries the post-translational modification Phosphothreonine; by autocatalysis. A compositionally biased stretch (polar residues) spans 603-613 (YTQQGGTAGSE). The interval 603-641 (YTQQGGTAGSETHSHEKAGGSGGDDVVDAEFEEVRDDKR) is disordered. Acidic residues predominate over residues 627-641 (DVVDAEFEEVRDDKR).

Belongs to the heat shock protein 70 family.

Its function is as follows. Acts as a chaperone. In Methylococcus capsulatus (strain ATCC 33009 / NCIMB 11132 / Bath), this protein is Chaperone protein DnaK.